The chain runs to 399 residues: Probable endo-xylogalacturonan hydrolase A (399 aa).

The first 19 residues, 1 to 19 (MTFGKAAFLSFSLFGASWA), serve as a signal peptide directing secretion. PbH1 repeat units follow at residues 177-207 (TTNA…DIGE), 208-229 (STYV…AFKP), 231-251 (CNYL…SVGS), 260-283 (VQNV…KTYP), and 293-314 (VTNV…QIQS). Catalysis depends on Asp-222, which acts as the Proton donor. His-245 is an active-site residue. Asn-295 and Asn-382 each carry an N-linked (GlcNAc...) asparagine glycan.

It belongs to the glycosyl hydrolase 28 family.

It localises to the secreted. Its function is as follows. Pectinolytic enzyme involved in the degradation of xylogalacturonan (xga), a galacturonan backbone heavily substituted with xylose, and which is one important component of the hairy regions of pectin. Activity requires a galacturonic acid backbone substituted with xylose. This Emericella nidulans (strain FGSC A4 / ATCC 38163 / CBS 112.46 / NRRL 194 / M139) (Aspergillus nidulans) protein is Probable endo-xylogalacturonan hydrolase A (xghA).